A 267-amino-acid polypeptide reads, in one-letter code: Centromere protein Q (267 aa).

Composition is skewed to basic residues over residues 1–22 (MSGK…LKQR) and 39–49 (KRNRSHAKHLS). Residues 1–54 (MSGKARASRKKPQQVKRSLKQRANKEADLPENEVGNTAKRNRSHAKHLSSKVTG) form a disordered region. The residue at position 49 (serine 49) is a Phosphoserine. The stretch at 100–202 (IKRKEEIQCH…EEQEVKQVFH (103 aa)) forms a coiled coil.

It belongs to the CENP-Q/OKP1 family. As to quaternary structure, component of the CENPA-CAD complex, composed of CENPI, CENPK, CENPL, CENPO, CENPP, CENPQ, CENPR and CENPS. The CENPA-CAD complex interacts with the CENPA-NAC complex, at least composed of CENPA, CENPC, CENPH, CENPM, CENPN, CENPT and CENPU. Phosphorylation at Ser-49 is essential for CENPE recruitment to kinetochores and orderly chromosome congression.

Its subcellular location is the nucleus. It localises to the chromosome. The protein localises to the centromere. Component of the CENPA-CAD (nucleosome distal) complex, a complex recruited to centromeres which is involved in assembly of kinetochore proteins, mitotic progression and chromosome segregation. May be involved in incorporation of newly synthesized CENPA into centromeres via its interaction with the CENPA-NAC complex. Plays an important role in chromosome congression and in the recruitment of CENP-O complex (which comprises CENPO, CENPP, CENPQ and CENPU), CENPE and PLK1 to the kinetochores. This is Centromere protein Q (Cenpq) from Mus musculus (Mouse).